The following is a 160-amino-acid chain: SsrA-binding protein (160 aa).

The protein belongs to the SmpB family.

Its subcellular location is the cytoplasm. Functionally, required for rescue of stalled ribosomes mediated by trans-translation. Binds to transfer-messenger RNA (tmRNA), required for stable association of tmRNA with ribosomes. tmRNA and SmpB together mimic tRNA shape, replacing the anticodon stem-loop with SmpB. tmRNA is encoded by the ssrA gene; the 2 termini fold to resemble tRNA(Ala) and it encodes a 'tag peptide', a short internal open reading frame. During trans-translation Ala-aminoacylated tmRNA acts like a tRNA, entering the A-site of stalled ribosomes, displacing the stalled mRNA. The ribosome then switches to translate the ORF on the tmRNA; the nascent peptide is terminated with the 'tag peptide' encoded by the tmRNA and targeted for degradation. The ribosome is freed to recommence translation, which seems to be the essential function of trans-translation. This is SsrA-binding protein from Shewanella amazonensis (strain ATCC BAA-1098 / SB2B).